We begin with the raw amino-acid sequence, 141 residues long: Cystatin (141 aa).

Residues 1 to 26 (MVHSQLPVAAPLRLLCALLLLPSATM) form the signal peptide. The region spanning 29–129 (GGLSPRSVTD…CHFQVWSRPW (101 aa)) is the Cystatin domain. The Secondary area of contact signature appears at 73 to 77 (QVVAG). 2 disulfide bridges follow: Cys91–Cys107 and Cys120–Cys140.

Belongs to the cystatin family. As to expression, expressed at a low level by the venom gland (at protein level).

It localises to the secreted. In terms of biological role, inhibits various C1 cysteine proteases including cathepsin L, papain and cathepsin B. This protein has no toxic activity and its function in the venom is unknown. It may play a role as a housekeeping or regulatory protein. The chain is Cystatin from Oxyuranus scutellatus scutellatus (Australian taipan).